A 236-amino-acid polypeptide reads, in one-letter code: MVCDTLVYHPSVTRFVKFLDGSAGREKVLRLLQYLARFLAVQNSSLLARQLQAQFTTVRKFLRFLKPLNHLQAAAKFYDNKLASDNVVRVCNVLKNIFFAAYLSLDQVNLLRILKVIPVTVLTGKKIPRWSNWCWLFGLLSGLAMDLRKIQTSHAQIAAFVKAKSQSQGDEHEDHKKVLGKAYQDRYTALRRLFWDAADSFIVLNNLGYLSSNEEYVALSGVVTSILGMQDMWKAT.

This sequence belongs to the peroxin-11 family. Homooligomer. Interacts with PEX34.

It is found in the peroxisome membrane. Involved in peroxisomal proliferation. Promotes peroxisome division and biogenesis. The protein is Peroxisomal membrane protein PMP27 (PEX11) of Saccharomyces cerevisiae (strain ATCC 204508 / S288c) (Baker's yeast).